The primary structure comprises 331 residues: Phenylalanine--tRNA ligase alpha subunit (331 aa).

E252 is a Mg(2+) binding site.

This sequence belongs to the class-II aminoacyl-tRNA synthetase family. Phe-tRNA synthetase alpha subunit type 1 subfamily. In terms of assembly, tetramer of two alpha and two beta subunits. Requires Mg(2+) as cofactor.

The protein resides in the cytoplasm. The enzyme catalyses tRNA(Phe) + L-phenylalanine + ATP = L-phenylalanyl-tRNA(Phe) + AMP + diphosphate + H(+). The sequence is that of Phenylalanine--tRNA ligase alpha subunit from Hahella chejuensis (strain KCTC 2396).